Consider the following 184-residue polypeptide: Photosystem I assembly protein Ycf4 (184 aa).

2 helical membrane passes run 22–42 (FCWA…GTSS) and 57–77 (ILFF…LFIS).

It belongs to the Ycf4 family.

The protein localises to the plastid. Its subcellular location is the chloroplast thylakoid membrane. Its function is as follows. Seems to be required for the assembly of the photosystem I complex. The polypeptide is Photosystem I assembly protein Ycf4 (Liriodendron tulipifera (Tuliptree)).